A 544-amino-acid polypeptide reads, in one-letter code: Chaperonin GroEL (544 aa).

ATP contacts are provided by residues Thr30–Pro33, Lys51, Asp87–Thr91, Gly415, and Asp496.

The protein belongs to the chaperonin (HSP60) family. Forms a cylinder of 14 subunits composed of two heptameric rings stacked back-to-back. Interacts with the co-chaperonin GroES.

It is found in the cytoplasm. The enzyme catalyses ATP + H2O + a folded polypeptide = ADP + phosphate + an unfolded polypeptide.. Functionally, together with its co-chaperonin GroES, plays an essential role in assisting protein folding. The GroEL-GroES system forms a nano-cage that allows encapsulation of the non-native substrate proteins and provides a physical environment optimized to promote and accelerate protein folding. The protein is Chaperonin GroEL of Granulibacter bethesdensis (strain ATCC BAA-1260 / CGDNIH1).